Consider the following 264-residue polypeptide: GATA transcription factor 2 (264 aa).

The span at 29-42 (SSSGGSTAATSSSS) shows a compositional bias: low complexity. Disordered regions lie at residues 29–57 (SSSG…HHLP) and 96–192 (NPLG…TPQW). A compositionally biased stretch (polar residues) spans 101–110 (TMTSVKTETS). A Nuclear localization signal motif is present at residues 114–121 (KPRSKRSR). Residues 155–164 (SGGGGGGGGR) show a composition bias toward gly residues. The segment at 175–229 (GGGMRRCTHCASEKTPQWRTGPLGPKTLCNACGVRFKSGRLVPEYRPASSPTFVL) adopts a GATA-type zinc-finger fold.

Belongs to the type IV zinc-finger family. Class A subfamily. Mostly expressed in roots. Also expressed in flowers and leaves, and to a lower extent in stems.

It localises to the nucleus. In terms of biological role, transcriptional activator that specifically binds 5'-GATA-3' or 5'-GAT-3' motifs within gene promoters. May be involved in the regulation of some light-responsive genes. In Arabidopsis thaliana (Mouse-ear cress), this protein is GATA transcription factor 2 (GATA2).